The chain runs to 257 residues: UPF0246 protein YaaA (257 aa).

The protein belongs to the UPF0246 family.

The chain is UPF0246 protein YaaA from Salmonella choleraesuis (strain SC-B67).